The primary structure comprises 944 residues: Isoleucine--tRNA ligase (944 aa).

The 'HIGH' region motif lies at 58–68 (PYANGSIHIGH). Position 563 (glutamate 563) interacts with L-isoleucyl-5'-AMP. The short motif at 604-608 (KMSKS) is the 'KMSKS' region element. Lysine 607 provides a ligand contact to ATP. Residues cysteine 907, cysteine 910, cysteine 927, and cysteine 930 each coordinate Zn(2+).

Belongs to the class-I aminoacyl-tRNA synthetase family. IleS type 1 subfamily. In terms of assembly, monomer. The cofactor is Zn(2+).

It localises to the cytoplasm. The catalysed reaction is tRNA(Ile) + L-isoleucine + ATP = L-isoleucyl-tRNA(Ile) + AMP + diphosphate. Catalyzes the attachment of isoleucine to tRNA(Ile). As IleRS can inadvertently accommodate and process structurally similar amino acids such as valine, to avoid such errors it has two additional distinct tRNA(Ile)-dependent editing activities. One activity is designated as 'pretransfer' editing and involves the hydrolysis of activated Val-AMP. The other activity is designated 'posttransfer' editing and involves deacylation of mischarged Val-tRNA(Ile). This chain is Isoleucine--tRNA ligase, found in Salmonella typhimurium (strain LT2 / SGSC1412 / ATCC 700720).